The following is a 118-amino-acid chain: NADH-ubiquinone oxidoreductase chain 3 (118 aa).

A run of 3 helical transmembrane segments spans residues 7–27 (ICISLVISLLLSLILLVVPFL), 62–82 (LVSILFIIFDLEVTFFFPWAV), and 87–107 (IDLFGFWSMMAFLLILTIGFL).

It belongs to the complex I subunit 3 family.

It is found in the mitochondrion membrane. The enzyme catalyses a ubiquinone + NADH + 5 H(+)(in) = a ubiquinol + NAD(+) + 4 H(+)(out). Its function is as follows. Core subunit of the mitochondrial membrane respiratory chain NADH dehydrogenase (Complex I) that is believed to belong to the minimal assembly required for catalysis. Complex I functions in the transfer of electrons from NADH to the respiratory chain. The immediate electron acceptor for the enzyme is believed to be ubiquinone. This chain is NADH-ubiquinone oxidoreductase chain 3 (ND3), found in Oenothera berteroana (Bertero's evening primrose).